Reading from the N-terminus, the 129-residue chain is KVYERCELAAAMKRLGLDNYRGYSLGNWVCAANYESSFNTQATNRNTDGSTDYGILEINSRWWCDNGKTPRAKNACGIPCSVLLRSDITEAVKCAKRIVSDGDGMNAWVAWRNRCKGTDVSRWIRGCRL.

The region spanning 1–129 is the C-type lysozyme domain; sequence KVYERCELAA…VSRWIRGCRL (129 aa). 4 disulfide bridges follow: Cys-6/Cys-127, Cys-30/Cys-115, Cys-64/Cys-80, and Cys-76/Cys-94. Residues Glu-35 and Asp-52 contribute to the active site.

The protein belongs to the glycosyl hydrolase 22 family.

Its subcellular location is the secreted. The catalysed reaction is Hydrolysis of (1-&gt;4)-beta-linkages between N-acetylmuramic acid and N-acetyl-D-glucosamine residues in a peptidoglycan and between N-acetyl-D-glucosamine residues in chitodextrins.. Lysozymes have primarily a bacteriolytic function; those in tissues and body fluids are associated with the monocyte-macrophage system and enhance the activity of immunoagents. In Anas platyrhynchos (Mallard), this protein is Lysozyme C-3.